A 493-amino-acid chain; its full sequence is Aspartyl/glutamyl-tRNA(Asn/Gln) amidotransferase subunit B (493 aa).

It belongs to the GatB/GatE family. GatB subfamily. As to quaternary structure, heterotrimer of A, B and C subunits.

The enzyme catalyses L-glutamyl-tRNA(Gln) + L-glutamine + ATP + H2O = L-glutaminyl-tRNA(Gln) + L-glutamate + ADP + phosphate + H(+). The catalysed reaction is L-aspartyl-tRNA(Asn) + L-glutamine + ATP + H2O = L-asparaginyl-tRNA(Asn) + L-glutamate + ADP + phosphate + 2 H(+). In terms of biological role, allows the formation of correctly charged Asn-tRNA(Asn) or Gln-tRNA(Gln) through the transamidation of misacylated Asp-tRNA(Asn) or Glu-tRNA(Gln) in organisms which lack either or both of asparaginyl-tRNA or glutaminyl-tRNA synthetases. The reaction takes place in the presence of glutamine and ATP through an activated phospho-Asp-tRNA(Asn) or phospho-Glu-tRNA(Gln). The chain is Aspartyl/glutamyl-tRNA(Asn/Gln) amidotransferase subunit B from Aromatoleum aromaticum (strain DSM 19018 / LMG 30748 / EbN1) (Azoarcus sp. (strain EbN1)).